Reading from the N-terminus, the 918-residue chain is Cell surface glycoprotein 1 (918 aa).

Residues 1–34 (MTDTNEKIRSLFLTALMVFSVFAGTIAFSGGAAA) form the signal peptide. N-linked (GlcNAc...) asparagine glycans are attached at residues N37, N56, N110, N219, N250, N261, and N291. N306 is a glycosylation site (N-linked (GalNAc...) asparagine). N-linked (GlcNAc...) asparagine glycans are attached at residues N318, N343, N392, N434, N487, N541, N555, N572, N585, N614, N715, N776, N836, and N845. The tract at residues 815 to 894 (HQDTNGNEAY…DESETTAAEG (80 aa)) is disordered. Positions 833 to 846 (YTQNGSAVTDSANV) are enriched in polar residues. Acidic residues predominate over residues 849–875 (VEEEQTEAPDTETETEAPDTETEEETD). A helical membrane pass occupies residues 894-914 (GPGFTAAIALIALVAAALLAV). Positions 895–897 (PGF) match the PGF sorting signal motif.

It belongs to the halobacterial S-layer protein family. Post-translationally, N-glycosylated on Asn-306; this N-linked glycan is a branched trisaccharide containing 2-amino-6-sulfo-2,6-dideoxy-glucose (sulfoquinovosamine). In terms of processing, cleaved by the archaeosortase ArtA at the C-terminus, with removal of a short hydrophobic segment. Lipidation.

Its subcellular location is the secreted. It localises to the cell wall. It is found in the S-layer. The protein localises to the cell membrane. Its function is as follows. S-layer protein. The S-layer is a paracrystalline mono-layered assembly of proteins which coat the surface of the cell. In H.hispanica, the S-layer contains two different glycoproteins, Slg1 and Slg2, which share highly similar amino acid sequences. This is Cell surface glycoprotein 1 from Haloarcula hispanica (strain ATCC 33960 / DSM 4426 / JCM 8911 / NBRC 102182 / NCIMB 2187 / VKM B-1755).